We begin with the raw amino-acid sequence, 238 residues long: MTQTPVVSLHQVHQQFGSTTILSGLSLDIAPGEFVALLGRSGSGKTTLLRLLAGLDTPSQGHLRLPERRAVVFQEPRLLPWKNVWRNVVLGVKDRPTRDHAVEALREVELAHRADAWPLTLSGGEAQRAGLARALVRSPELLLLDEPFAALDALTRLRMQSLVARLWEVHRTAVLLVTHDVDEALLLADRVVVLEHGRIAAERTISIPRPRRPGDAAFASLRLELLGLLGVREALAAA.

The region spanning 7 to 221 is the ABC transporter domain; sequence VSLHQVHQQF…RPGDAAFASL (215 aa). 39–46 lines the ATP pocket; it reads GRSGSGKT.

Belongs to the ABC transporter superfamily. Aliphatic sulfonates importer (TC 3.A.1.17.2) family. The complex is composed of two ATP-binding proteins (SsuB), two transmembrane proteins (SsuC) and a solute-binding protein (SsuA).

The protein localises to the cell inner membrane. The enzyme catalyses ATP + H2O + aliphatic sulfonate-[sulfonate-binding protein]Side 1 = ADP + phosphate + aliphatic sulfonateSide 2 + [sulfonate-binding protein]Side 1.. Functionally, part of the ABC transporter complex SsuABC involved in aliphatic sulfonates import. Responsible for energy coupling to the transport system. The sequence is that of Aliphatic sulfonates import ATP-binding protein SsuB from Granulibacter bethesdensis (strain ATCC BAA-1260 / CGDNIH1).